The chain runs to 320 residues: Pyrroline-5-carboxylate reductase 1, mitochondrial (320 aa).

S2 carries the post-translational modification N-acetylserine. NADP(+) contacts are provided by residues 6-11 (IGAGQL) and S34. NADPH-binding residues include A8, Q10, L11, S34, D36, N56, V70, K71, and A97. Residues N56, 69-72 (AVKP), and 95-97 (CAA) contribute to the NADP(+) site. Residue E164 coordinates L-proline. N230 provides a ligand contact to NADPH. Residues A237 and T238 each coordinate L-proline. S278 is subject to Phosphoserine. Positions 292–320 (LDSPPGTSLAPSGHSKLLPRSMAPAGKQD) are disordered.

This sequence belongs to the pyrroline-5-carboxylate reductase family. Homodecamer; composed of 5 homodimers. Interacts with LTO1.

It localises to the mitochondrion. It carries out the reaction L-proline + NADP(+) = (S)-1-pyrroline-5-carboxylate + NADPH + 2 H(+). The catalysed reaction is L-proline + NAD(+) = (S)-1-pyrroline-5-carboxylate + NADH + 2 H(+). It participates in amino-acid biosynthesis; L-proline biosynthesis; L-proline from L-glutamate 5-semialdehyde: step 1/1. Oxidoreductase that catalyzes the last step in proline biosynthesis, which corresponds to the reduction of pyrroline-5-carboxylate to L-proline using NAD(P)H. At physiologic concentrations, has higher specific activity in the presence of NADH. Involved in the cellular response to oxidative stress. This chain is Pyrroline-5-carboxylate reductase 1, mitochondrial (PYCR1), found in Bos taurus (Bovine).